The primary structure comprises 2341 residues: Pecanex-like protein 1 (2341 aa).

A run of 2 helical transmembrane segments spans residues 28 to 50 (ATFV…FTLY) and 57 to 74 (MIIV…FIVL). Residues 98–163 (FTDQRTKAEQ…SNQIGSGSSR (66 aa)) form a disordered region. An N-linked (GlcNAc...) asparagine glycan is attached at N109. Residues 143 to 163 (SSRNSYAGLDPSNQIGSGSSR) are compositionally biased toward polar residues. Residue N215 is glycosylated (N-linked (GlcNAc...) asparagine). Disordered regions lie at residues 270 to 294 (HSHS…VAFP), 311 to 331 (DPVS…SLVE), and 344 to 689 (DLKI…TRAR). Residues 272–282 (HSYRKDHRPRG) show a composition bias toward basic residues. 2 stretches are compositionally biased toward polar residues: residues 320–331 (KPLSGSKESLVE) and 347–356 (INTSQPPTKS). The N-linked (GlcNAc...) asparagine glycan is linked to N348. Residues 370-388 (SLRSLSTRSSGSTESYCSG) are compositionally biased toward low complexity. A glycan (N-linked (GlcNAc...) asparagine) is linked at N394. Over residues 394–404 (NSTVSSYKSEQ) the composition is skewed to polar residues. 3 stretches are compositionally biased toward basic and acidic residues: residues 430-455 (KKEC…EKIA), 465-478 (HEAK…EMHN), and 527-544 (SKVR…DVRP). Residues 554 to 569 (ASAHKSGRRRTGKKRA) are compositionally biased toward basic residues. Residues 605–635 (QSDLSRASSVQSAHQFSSDSSSSTTSHSCQS) are compositionally biased toward low complexity. N702 is a glycosylation site (N-linked (GlcNAc...) asparagine). A disordered region spans residues 756 to 834 (QVAFPEGEEQ…STAQVKVQSR (79 aa)). Residues 814-832 (LSLQDGQQGQQSTAQVKVQ) show a composition bias toward low complexity. N-linked (GlcNAc...) asparagine glycosylation is found at N852 and N863. Helical transmembrane passes span 1003–1025 (ILEN…ILLI), 1032–1049 (IWVF…YSLL), and 1067–1089 (IAYS…DYGS). N1091 carries an N-linked (GlcNAc...) asparagine glycan. The chain crosses the membrane as a helical span at residues 1110–1132 (FISARDLVIVFTLCFPIVFFIGL). N1155 is a glycosylation site (N-linked (GlcNAc...) asparagine). Helical transmembrane passes span 1160–1182 (LLAA…GLCY), 1194–1213 (IPVL…YHLS), 1266–1288 (LVVC…FTVL), and 1295–1312 (VLYT…YVLP). Residues N1579, N1720, N1982, N2062, and N2072 are each glycosylated (N-linked (GlcNAc...) asparagine). Disordered stretches follow at residues 2062-2120 (NATT…SPAR) and 2217-2237 (GQSS…NNSH). 3 stretches are compositionally biased toward polar residues: residues 2069–2078 (PHSNVTQGSI), 2096–2114 (YPPT…SGLV), and 2217–2236 (GQSS…ANNS). 2 N-linked (GlcNAc...) asparagine glycosylation sites follow: N2234 and N2260.

It belongs to the pecanex family.

The protein localises to the membrane. The polypeptide is Pecanex-like protein 1 (Homo sapiens (Human)).